The sequence spans 385 residues: Putative ESX-1 scaffolding and assembly protein SaeC (385 aa).

Its subcellular location is the cytoplasm. Functionally, may be involved in assembly of the ESX-1 / type VII specialized secretion system (T7SS), which exports several proteins including EsxA and EsxB. Involved in DNA conjugation in recipient (MKD8) strain. The chain is Putative ESX-1 scaffolding and assembly protein SaeC from Mycolicibacterium smegmatis (strain ATCC 700084 / mc(2)155) (Mycobacterium smegmatis).